The primary structure comprises 226 residues: Leucyl/phenylalanyl-tRNA--protein transferase (226 aa).

It belongs to the L/F-transferase family.

It is found in the cytoplasm. The catalysed reaction is N-terminal L-lysyl-[protein] + L-leucyl-tRNA(Leu) = N-terminal L-leucyl-L-lysyl-[protein] + tRNA(Leu) + H(+). It carries out the reaction N-terminal L-arginyl-[protein] + L-leucyl-tRNA(Leu) = N-terminal L-leucyl-L-arginyl-[protein] + tRNA(Leu) + H(+). It catalyses the reaction L-phenylalanyl-tRNA(Phe) + an N-terminal L-alpha-aminoacyl-[protein] = an N-terminal L-phenylalanyl-L-alpha-aminoacyl-[protein] + tRNA(Phe). Its function is as follows. Functions in the N-end rule pathway of protein degradation where it conjugates Leu, Phe and, less efficiently, Met from aminoacyl-tRNAs to the N-termini of proteins containing an N-terminal arginine or lysine. The polypeptide is Leucyl/phenylalanyl-tRNA--protein transferase (Pseudomonas aeruginosa (strain LESB58)).